We begin with the raw amino-acid sequence, 104 residues long: Small ribosomal subunit protein uS10 (104 aa).

This sequence belongs to the universal ribosomal protein uS10 family. As to quaternary structure, part of the 30S ribosomal subunit.

In terms of biological role, involved in the binding of tRNA to the ribosomes. The chain is Small ribosomal subunit protein uS10 from Aquifex aeolicus (strain VF5).